We begin with the raw amino-acid sequence, 439 residues long: UDP-N-acetylmuramoylalanine--D-glutamate ligase (439 aa).

Residue 116–122 (GSNGKTT) coordinates ATP.

The protein belongs to the MurCDEF family.

The protein resides in the cytoplasm. It catalyses the reaction UDP-N-acetyl-alpha-D-muramoyl-L-alanine + D-glutamate + ATP = UDP-N-acetyl-alpha-D-muramoyl-L-alanyl-D-glutamate + ADP + phosphate + H(+). It functions in the pathway cell wall biogenesis; peptidoglycan biosynthesis. Its function is as follows. Cell wall formation. Catalyzes the addition of glutamate to the nucleotide precursor UDP-N-acetylmuramoyl-L-alanine (UMA). The chain is UDP-N-acetylmuramoylalanine--D-glutamate ligase from Shewanella oneidensis (strain ATCC 700550 / JCM 31522 / CIP 106686 / LMG 19005 / NCIMB 14063 / MR-1).